The sequence spans 586 residues: 2-succinyl-5-enolpyruvyl-6-hydroxy-3-cyclohexene-1-carboxylate synthase (586 aa).

The protein belongs to the TPP enzyme family. MenD subfamily. As to quaternary structure, homodimer. The cofactor is Mg(2+). Mn(2+) serves as cofactor. Requires thiamine diphosphate as cofactor.

It carries out the reaction isochorismate + 2-oxoglutarate + H(+) = 5-enolpyruvoyl-6-hydroxy-2-succinyl-cyclohex-3-ene-1-carboxylate + CO2. It participates in quinol/quinone metabolism; 1,4-dihydroxy-2-naphthoate biosynthesis; 1,4-dihydroxy-2-naphthoate from chorismate: step 2/7. It functions in the pathway quinol/quinone metabolism; menaquinone biosynthesis. Catalyzes the thiamine diphosphate-dependent decarboxylation of 2-oxoglutarate and the subsequent addition of the resulting succinic semialdehyde-thiamine pyrophosphate anion to isochorismate to yield 2-succinyl-5-enolpyruvyl-6-hydroxy-3-cyclohexene-1-carboxylate (SEPHCHC). In Natronomonas pharaonis (strain ATCC 35678 / DSM 2160 / CIP 103997 / JCM 8858 / NBRC 14720 / NCIMB 2260 / Gabara) (Halobacterium pharaonis), this protein is 2-succinyl-5-enolpyruvyl-6-hydroxy-3-cyclohexene-1-carboxylate synthase.